The sequence spans 235 residues: Ubiquinone/menaquinone biosynthesis C-methyltransferase UbiE (235 aa).

The S-adenosyl-L-methionine site is built by Thr60 and Asp81.

Belongs to the class I-like SAM-binding methyltransferase superfamily. MenG/UbiE family.

It catalyses the reaction a 2-demethylmenaquinol + S-adenosyl-L-methionine = a menaquinol + S-adenosyl-L-homocysteine + H(+). The enzyme catalyses a 2-methoxy-6-(all-trans-polyprenyl)benzene-1,4-diol + S-adenosyl-L-methionine = a 5-methoxy-2-methyl-3-(all-trans-polyprenyl)benzene-1,4-diol + S-adenosyl-L-homocysteine + H(+). It functions in the pathway quinol/quinone metabolism; menaquinone biosynthesis; menaquinol from 1,4-dihydroxy-2-naphthoate: step 2/2. Its pathway is cofactor biosynthesis; ubiquinone biosynthesis. Functionally, methyltransferase required for the conversion of demethylmenaquinol (DMKH2) to menaquinol (MKH2) and the conversion of 2-polyprenyl-6-methoxy-1,4-benzoquinol (DDMQH2) to 2-polyprenyl-3-methyl-6-methoxy-1,4-benzoquinol (DMQH2). This is Ubiquinone/menaquinone biosynthesis C-methyltransferase UbiE from Geotalea uraniireducens (strain Rf4) (Geobacter uraniireducens).